The primary structure comprises 102 residues: Small ribosomal subunit protein bS18 (102 aa).

It belongs to the bacterial ribosomal protein bS18 family. As to quaternary structure, part of the 30S ribosomal subunit. Forms a tight heterodimer with protein bS6.

Its function is as follows. Binds as a heterodimer with protein bS6 to the central domain of the 16S rRNA, where it helps stabilize the platform of the 30S subunit. The polypeptide is Small ribosomal subunit protein bS18 (Orientia tsutsugamushi (strain Boryong) (Rickettsia tsutsugamushi)).